Here is a 365-residue protein sequence, read N- to C-terminus: Glucan endo-1,3-beta-glucosidase, basic vacuolar isoform (365 aa).

Residues 1–32 form the signal peptide; that stretch reads MSTLHKHNTPQMAAITLLGLLLVASSIEIAGA. E128 functions as the Proton donor in the catalytic mechanism. E273 serves as the catalytic Nucleophile. The propeptide at 349 to 365 is removed in mature form; it reads VSGSVETNATASLISEI. N-linked (GlcNAc...) asparagine glycosylation occurs at N356.

Belongs to the glycosyl hydrolase 17 family.

Its subcellular location is the vacuole. The catalysed reaction is Hydrolysis of (1-&gt;3)-beta-D-glucosidic linkages in (1-&gt;3)-beta-D-glucans.. Functionally, implicated in the defense of plants against pathogens. This Nicotiana plumbaginifolia (Leadwort-leaved tobacco) protein is Glucan endo-1,3-beta-glucosidase, basic vacuolar isoform (GN2).